Here is a 2568-residue protein sequence, read N- to C-terminus: Highly reducing polyketide synthase AN6791 (2568 aa).

A Ketosynthase family 3 (KS3) domain is found at 11–445 (AEPIAIVGLS…GTNAHLIVES (435 aa)). Catalysis depends on for beta-ketoacyl synthase activity residues Cys-200, His-326, and His-366. The 325-residue stretch at 558-882 (VFTGQGAQWY…GSLVREVSAV (325 aa)) folds into the Malonyl-CoA:ACP transacylase (MAT) domain. The interval 949-1087 (HDLLGSLVLG…GLITMEPEDA (139 aa)) is N-terminal hotdog fold. The region spanning 949–1258 (HDLLGSLVLG…FQSVGRSAAP (310 aa)) is the PKS/mFAS DH domain. The Proton acceptor; for dehydratase activity role is filled by His-981. Residues 1104-1258 (TRRFGPSDLY…FQSVGRSAAP (155 aa)) form a C-terminal hotdog fold region. Asp-1169 serves as the catalytic Proton donor; for dehydratase activity. Residues 1311-1620 (RACLYFIYDA…EVRDCESDEW (310 aa)) form a methyltransferase (CMet) domain region. The 318-residue stretch at 1857–2174 (GLLDTIAFDD…VGKHSGKVVL (318 aa)) folds into the Enoyl reductase (ER) domain. A Ketoreductase (KR) domain is found at 2197-2375 (ASYLLVGGAG…AVSMDLGPVK (179 aa)). The Carrier domain maps to 2481 to 2558 (QAEKLVVEAI…ALASEVTRKS (78 aa)). Ser-2518 carries the post-translational modification O-(pantetheine 4'-phosphoryl)serine.

The cofactor is pantetheine 4'-phosphate.

It functions in the pathway secondary metabolite biosynthesis. Functionally, highly reducing polyketide synthase; part of a cluster that mediates the biosynthesis of a yet undetermined secondary metabolite. With esterase AN6793, produces a pathway intermediate compound with molecular weight 258. The sequence is that of Highly reducing polyketide synthase AN6791 from Emericella nidulans (strain FGSC A4 / ATCC 38163 / CBS 112.46 / NRRL 194 / M139) (Aspergillus nidulans).